Consider the following 331-residue polypeptide: Tungstate uptake system ATP-binding protein TupC (331 aa).

Residues 2–230 enclose the ABC transporter domain; the sequence is IEISNLFFNY…NQGVKFCNFI (229 aa). 34–41 contacts ATP; the sequence is GANGSGKS.

Belongs to the ABC transporter superfamily. The complex is composed of two ATP-binding proteins (TupC), two transmembrane proteins (TupB) and a solute-binding protein (TupA).

It catalyses the reaction tungstate(in) + ATP + H2O = tungstate(out) + ADP + phosphate + H(+). In terms of biological role, part of an ABC transporter complex involved in ultra-high affinity tungstate uptake. Probably responsible for energy coupling to the transport system. The chain is Tungstate uptake system ATP-binding protein TupC from Campylobacter jejuni subsp. jejuni serotype O:2 (strain ATCC 700819 / NCTC 11168).